A 384-amino-acid chain; its full sequence is Probable circularly permuted 1,3-beta-glucanase PGA52 (384 aa).

A signal peptide spans 1 to 17 (MLFSSLLVSTLVSVATA). N-linked (GlcNAc...) asparagine glycosylation is found at N118, N128, N170, N210, and N244. Positions 254–259 (EFDIFE) match the ExDxxE motif motif. 2 N-linked (GlcNAc...) asparagine glycosylation sites follow: N262 and N318. The GPI-anchor amidated serine moiety is linked to residue S361. A propeptide spans 362-384 (GGVSYQPSFITNLLMTVLTLWVI) (removed in mature form).

This sequence belongs to the PGA52 family.

It is found in the cell membrane. The catalysed reaction is Hydrolysis of (1-&gt;3)-beta-D-glucosidic linkages in (1-&gt;3)-beta-D-glucans.. Functionally, probable circularly permuted 1,3-beta-glucanase involved in cell wall modification through beta-1,3-glucan network alterations such as increased branching or remodeling. In Candida albicans (strain SC5314 / ATCC MYA-2876) (Yeast), this protein is Probable circularly permuted 1,3-beta-glucanase PGA52 (PGA52).